A 59-amino-acid polypeptide reads, in one-letter code: Large ribosomal subunit protein bL35 (59 aa).

Disordered stretches follow at residues 1-22 (MKVK…IKRK) and 30-49 (APHK…TVSA). Basic residues predominate over residues 30–43 (APHKTTKQKRHLRK).

The protein belongs to the bacterial ribosomal protein bL35 family.

This is Large ribosomal subunit protein bL35 (rpmI) from Mycoplasma pneumoniae (strain ATCC 29342 / M129 / Subtype 1) (Mycoplasmoides pneumoniae).